The primary structure comprises 329 residues: Glycerol-3-phosphate dehydrogenase [NAD(P)+] (329 aa).

4 residues coordinate NADPH: S10, W11, R31, and K105. The sn-glycerol 3-phosphate site is built by K105, G134, and S136. A138 is an NADPH binding site. Residues K189, D242, S252, R253, and N254 each coordinate sn-glycerol 3-phosphate. The Proton acceptor role is filled by K189. R253 contacts NADPH. Residues V277 and E279 each coordinate NADPH.

The protein belongs to the NAD-dependent glycerol-3-phosphate dehydrogenase family.

It is found in the cytoplasm. The catalysed reaction is sn-glycerol 3-phosphate + NAD(+) = dihydroxyacetone phosphate + NADH + H(+). The enzyme catalyses sn-glycerol 3-phosphate + NADP(+) = dihydroxyacetone phosphate + NADPH + H(+). It participates in membrane lipid metabolism; glycerophospholipid metabolism. Its function is as follows. Catalyzes the reduction of the glycolytic intermediate dihydroxyacetone phosphate (DHAP) to sn-glycerol 3-phosphate (G3P), the key precursor for phospholipid synthesis. This is Glycerol-3-phosphate dehydrogenase [NAD(P)+] from Neisseria gonorrhoeae (strain ATCC 700825 / FA 1090).